We begin with the raw amino-acid sequence, 59 residues long: Cecropin-B1 (59 aa).

Residues 1-23 (MNFNKLFLIVILAALLLLGQTEA) form the signal peptide. At Leu-57 the chain carries Leucine amide.

The protein belongs to the cecropin family.

Its subcellular location is the secreted. In terms of biological role, cecropins have lytic and antibacterial activity against several Gram-positive and Gram-negative bacteria. The chain is Cecropin-B1 (CECB1) from Culex pipiens pipiens (Northern house mosquito).